The sequence spans 599 residues: Crinkler effector protein 8 (599 aa).

A signal peptide spans 1–17 (MVTLFCAVVGVAGSTFP). The interval 18–52 (VDINENKSVGHLKKAIKEEKMYQFPADELQLFLAK) is LQLFLAK domain. N-linked (GlcNAc...) asparagine glycosylation is present at asparagine 23. The DWL domain stretch occupies residues 53-109 (AGGNAWLSSLTEDVKKLKKGEKTALVKSLTQEEKELQGEDPISECLEGMDPPKVKQI). Positions 110 to 116 (HVLVALP) match the HVLVXXP motif motif. The segment at 117–590 (PGTSSAPISD…EAAEQESQGK (474 aa)) is C-terminal D2 effector domain. Serine 249, serine 281, and serine 385 each carry phosphoserine. Residues 289–590 (LSKKLVWSYG…EAAEQESQGK (302 aa)) form the Protein kinase domain. Aspartate 470 (proton acceptor) is an active-site residue. Serine 474 and serine 587 each carry phosphoserine. Positions 577–599 (RFEREAAEQESQGKGVRKKHRRA) are disordered. A Host nuclear localization signal motif is present at residues 590–599 (KGVRKKHRRA).

This sequence in the N-terminal section; belongs to the Crinkler effector family. The protein in the C-terminal section; belongs to the protein kinase superfamily. Dimerizes in host plants. In terms of processing, autophosphorylated at Ser-249, Ser-281, Ser-385, Ser-474 and Ser-587. Additional serines or threonines are also targeted for phosphorylation.

It localises to the secreted. The protein resides in the host nucleus. The catalysed reaction is L-seryl-[protein] + ATP = O-phospho-L-seryl-[protein] + ADP + H(+). It carries out the reaction L-threonyl-[protein] + ATP = O-phospho-L-threonyl-[protein] + ADP + H(+). In terms of biological role, secreted effector that induces cell death when expressed in host plants. Acts as a kinase and is able to autophosphorylate, however its cell death inducing ability is not a direct result of its kinase activity, but rather a consequence of the phosphorylated state of the five identified serine residues in the CRN8 protein. This is Crinkler effector protein 8 from Phytophthora infestans (Potato late blight agent).